Consider the following 392-residue polypeptide: MENVVIIRYGEIMLKGNNKRFFEDKLVKQIRHALSDLGKLKVYKAHSRIYVDVDAYDVADITDRVKKVFGVVSLSVAKRFEVDMDRIKEVVLEEIKDRMLENPGIKTFKMESKRGDKRFPMQSLEISRELGGHVLENIENISVDVHHPDVSIHVEIRDQAFVFSNKISGFGGLPLGTNGKALLLLSGGIDSPVAGWMVGKRGVDIEAIHFHSYPFTSDRAKEKVMDLAKILSGYCGAFKLYSVNLLPIQKEINEKCPEEEMTILSRRFMMKIAERVALQNDCDALVTGESIGQVASQTVKSLNVTNSAVDLPVFRPLIAMDKVDIIDLSQKIETYETSILPFEDCCTVFLPKHPVTQPKLEKILQSESKLDVEALISAALEALEVEKISIED.

The THUMP domain occupies 59-167; the sequence is ADITDRVKKV…DQAFVFSNKI (109 aa). Residues 184–185, 209–210, Arg-266, Gly-288, and Gln-297 each bind ATP; these read LL and HF.

Belongs to the ThiI family.

It localises to the cytoplasm. The enzyme catalyses [ThiI sulfur-carrier protein]-S-sulfanyl-L-cysteine + a uridine in tRNA + 2 reduced [2Fe-2S]-[ferredoxin] + ATP + H(+) = [ThiI sulfur-carrier protein]-L-cysteine + a 4-thiouridine in tRNA + 2 oxidized [2Fe-2S]-[ferredoxin] + AMP + diphosphate. The catalysed reaction is [ThiS sulfur-carrier protein]-C-terminal Gly-Gly-AMP + S-sulfanyl-L-cysteinyl-[cysteine desulfurase] + AH2 = [ThiS sulfur-carrier protein]-C-terminal-Gly-aminoethanethioate + L-cysteinyl-[cysteine desulfurase] + A + AMP + 2 H(+). It functions in the pathway cofactor biosynthesis; thiamine diphosphate biosynthesis. Functionally, catalyzes the ATP-dependent transfer of a sulfur to tRNA to produce 4-thiouridine in position 8 of tRNAs, which functions as a near-UV photosensor. Also catalyzes the transfer of sulfur to the sulfur carrier protein ThiS, forming ThiS-thiocarboxylate. This is a step in the synthesis of thiazole, in the thiamine biosynthesis pathway. The sulfur is donated as persulfide by IscS. This Alkaliphilus oremlandii (strain OhILAs) (Clostridium oremlandii (strain OhILAs)) protein is Probable tRNA sulfurtransferase.